A 263-amino-acid chain; its full sequence is 4-hydroxy-tetrahydrodipicolinate reductase (263 aa).

10-15 serves as a coordination point for NAD(+); sequence GASGKM. R38 contacts NADP(+). Residues 97 to 99 and 123 to 126 each bind NAD(+); these read GTT and APNF. Residue H153 is the Proton donor/acceptor of the active site. (S)-2,3,4,5-tetrahydrodipicolinate is bound at residue H154. K157 acts as the Proton donor in catalysis. 163 to 164 lines the (S)-2,3,4,5-tetrahydrodipicolinate pocket; it reads GT.

The protein belongs to the DapB family.

It localises to the cytoplasm. It catalyses the reaction (S)-2,3,4,5-tetrahydrodipicolinate + NAD(+) + H2O = (2S,4S)-4-hydroxy-2,3,4,5-tetrahydrodipicolinate + NADH + H(+). The catalysed reaction is (S)-2,3,4,5-tetrahydrodipicolinate + NADP(+) + H2O = (2S,4S)-4-hydroxy-2,3,4,5-tetrahydrodipicolinate + NADPH + H(+). The protein operates within amino-acid biosynthesis; L-lysine biosynthesis via DAP pathway; (S)-tetrahydrodipicolinate from L-aspartate: step 4/4. In terms of biological role, catalyzes the conversion of 4-hydroxy-tetrahydrodipicolinate (HTPA) to tetrahydrodipicolinate. This Dehalococcoides mccartyi (strain ATCC BAA-2266 / KCTC 15142 / 195) (Dehalococcoides ethenogenes (strain 195)) protein is 4-hydroxy-tetrahydrodipicolinate reductase.